Here is a 240-residue protein sequence, read N- to C-terminus: Phosphoribosylaminoimidazole-succinocarboxamide synthase (240 aa).

Belongs to the SAICAR synthetase family.

It catalyses the reaction 5-amino-1-(5-phospho-D-ribosyl)imidazole-4-carboxylate + L-aspartate + ATP = (2S)-2-[5-amino-1-(5-phospho-beta-D-ribosyl)imidazole-4-carboxamido]succinate + ADP + phosphate + 2 H(+). It functions in the pathway purine metabolism; IMP biosynthesis via de novo pathway; 5-amino-1-(5-phospho-D-ribosyl)imidazole-4-carboxamide from 5-amino-1-(5-phospho-D-ribosyl)imidazole-4-carboxylate: step 1/2. This chain is Phosphoribosylaminoimidazole-succinocarboxamide synthase, found in Wolbachia pipientis subsp. Culex pipiens (strain wPip).